Consider the following 191-residue polypeptide: MGGSGSRLSKELLAEYQDLTFLTKQEILLAHRRFCELLPQEQRSVESSLRAQVPFEQILSLPELKANPFKERICRVFSTSPAKDSLSFEDFLDLLSVFSDTATPDIKSHYAFRIFDFDDDGTLNREDLSRLVNCLTGEGEDTRLSASEMKQLIDNILEESDIDRDGTINLSEFQHVISRSPDFASSFKIVL.

A lipid anchor (N-myristoyl glycine) is attached at glycine 2. EF-hand domains follow at residues 103 to 138 (TPDIKSHYAFRIFDFDDDGTLNREDLSRLVNCLTGE) and 148 to 183 (EMKQLIDNILEESDIDRDGTINLSEFQHVISRSPDF). Residues aspartate 116, aspartate 118, aspartate 120, threonine 122, aspartate 127, aspartate 161, aspartate 163, aspartate 165, threonine 167, and glutamate 172 each coordinate Ca(2+). Phosphoserine is present on aspartate 118.

Monomer. Interacts with MYO1C. Interacts (via C-terminal region) with PPP3R1 and CACNA1C; the interactions increase upon cardiomyocytes hypertrophy. Interacts with the heterodimeric integrin alpha-IIb/beta3 (ITGA2B-ITGB3). Interacts with ITGA2B (via cytoplasmic domain); the interaction is direct and calcium-dependent. Interacts with the protein kinases PLK2/SNK and PRKDC (via the region immediately upstream of the kinase domain). Interacts with PLK3; the interaction inhibits PLK3 kinase activity. Interacts with PSEN2. Interacts (via C-terminus) with F8. Interacts with NBR1 (via C-terminus). Interacts with FEZ1 (via C-terminus). Interacts with UBR5 (via C-terminus); the interaction is sensitive to DNA damage, and may target CIB1 for ubiquitin-mediated degradation. Interacts with IFI6; the interaction is direct. Interacts with BCL2. Interacts with ITPR3; the interaction occurs in a calcium-dependent manner. Interacts with PTK2/FAK1. Interacts with MAP3K5; the interaction inhibits MAP3K5 activation by phosphorylation, and its subsequent interaction with TRAF2. Isoform 2 interacts with PRKD2 (via N-terminal AP-rich region), PTK2/FAK1 and PAK1. Interacts with TAS1R2 (via C-terminus); the interaction is independent of the myristoylation state of CIB1. Interacts (via C-terminal region) with STMN2 (via the N-terminal region); the interaction is direct, occurs in a calcium-dependent manner and attenuates the STMN2-induced neurite outgrowth inhibition. Interacts with SPHK1, the interaction occurs in a calcium-dependent manner. Interacts with ITGA2B (via C-terminal cytoplasmic tail); the interaction occurs upon platelet aggregation and is stabilized/increased in a calcium and magnesium-dependent manner. Interacts with PAK1 (via N-terminal region); the interaction is direct and occurs in a calcium-dependent manner. Interacts with RAC3 (via C-terminal region); the interaction induces their association with the cytoskeleton upon alpha-IIb/beta3 integrin-mediated adhesion. Interacts with ITGA5 and ITGAV. Interacts and forms a complex with TMC6 and TMC8; the interaction stabilizes each component of the complex. In terms of assembly, (Microbial infection) Interacts with human papillomavirus 4/HPV4 protein E8, human papillomavirus 5/HPV5 protein E1, and human papillomavirus 16/HPV16 proteins E2 and E5. In terms of processing, phosphorylation of isoform 2 at Ser-118 by PRKD2 increases its ability to stimulate tumor angiogenesis. Ubiquitously expressed. Expressed in the epidermis, hair follicles and keratinocytes. Detected in platelets and in cell lines of megakaryocytic and erythrocytic lineages. Both isoform 1 and isoform 2 are detected in various cancer cell lines, with isoform 2 being the predominant form (at protein level).

It localises to the membrane. The protein localises to the cell membrane. It is found in the sarcolemma. The protein resides in the apical cell membrane. Its subcellular location is the cell projection. It localises to the ruffle membrane. The protein localises to the filopodium tip. It is found in the growth cone. The protein resides in the lamellipodium. Its subcellular location is the cytoplasm. It localises to the cytoskeleton. The protein localises to the microtubule organizing center. It is found in the centrosome. The protein resides in the perinuclear region. Its subcellular location is the nucleus. It localises to the neuron projection. The protein localises to the perikaryon. It is found in the golgi apparatus. The protein resides in the trans-Golgi network. In terms of biological role, calcium-binding protein that plays a role in the regulation of numerous cellular processes, such as cell differentiation, cell division, cell proliferation, cell migration, thrombosis, angiogenesis, cardiac hypertrophy and apoptosis. Involved in bone marrow megakaryocyte differentiation by negatively regulating thrombopoietin-mediated signaling pathway. Participates in the endomitotic cell cycle of megakaryocyte, a form of mitosis in which both karyokinesis and cytokinesis are interrupted. Plays a role in integrin signaling by negatively regulating alpha-IIb/beta3 activation in thrombin-stimulated megakaryocytes preventing platelet aggregation. Up-regulates PTK2/FAK1 activity, and is also needed for the recruitment of PTK2/FAK1 to focal adhesions; it thus appears to play an important role in focal adhesion formation. Positively regulates cell migration on fibronectin in a CDC42-dependent manner, the effect being negatively regulated by PAK1. Functions as a negative regulator of stress activated MAP kinase (MAPK) signaling pathways. Down-regulates inositol 1,4,5-trisphosphate receptor-dependent calcium signaling. Involved in sphingosine kinase SPHK1 translocation to the plasma membrane in a N-myristoylation-dependent manner preventing TNF-alpha-induced apoptosis. Regulates serine/threonine-protein kinase PLK3 activity for proper completion of cell division progression. Plays a role in microtubule (MT) dynamics during neuronal development; disrupts the MT depolymerization activity of STMN2 attenuating NGF-induced neurite outgrowth and the MT reorganization at the edge of lamellipodia. Promotes cardiomyocyte hypertrophy via activation of the calcineurin/NFAT signaling pathway. Stimulates calcineurin PPP3R1 activity by mediating its anchoring to the sarcolemma. In ischemia-induced (pathological or adaptive) angiogenesis, stimulates endothelial cell proliferation, migration and microvessel formation by activating the PAK1 and ERK1/ERK2 signaling pathway. Also promotes cancer cell survival and proliferation. May regulate cell cycle and differentiation of spermatogenic germ cells, and/or differentiation of supporting Sertoli cells. Forms a complex with TMC6/EVER1 and TMC8/EVER2 in lymphocytes and keratynocytes where CIB1 stabilizes TMC6 and TMC8 levels and reciprocally. Functionally, acts as a restriction factor that promotes keratinocyte-intrinsic immunity to human beta-papillomaviruses (HPVs). Plays a regulatory role in angiogenesis and tumor growth by mediating PKD/PRKD2-induced vascular endothelial growth factor A (VEGFA) secretion. This is Calcium and integrin-binding protein 1 (CIB1) from Homo sapiens (Human).